The sequence spans 446 residues: Glutamyl-tRNA reductase (446 aa).

Substrate-binding positions include 49 to 52 (TCNR), S109, 114 to 116 (ETQ), and Q120. The active-site Nucleophile is C50. 189-194 (GAGEMA) contributes to the NADP(+) binding site.

This sequence belongs to the glutamyl-tRNA reductase family. Homodimer.

The enzyme catalyses (S)-4-amino-5-oxopentanoate + tRNA(Glu) + NADP(+) = L-glutamyl-tRNA(Glu) + NADPH + H(+). The protein operates within porphyrin-containing compound metabolism; protoporphyrin-IX biosynthesis; 5-aminolevulinate from L-glutamyl-tRNA(Glu): step 1/2. Functionally, catalyzes the NADPH-dependent reduction of glutamyl-tRNA(Glu) to glutamate 1-semialdehyde (GSA). The polypeptide is Glutamyl-tRNA reductase (Macrococcus caseolyticus (strain JCSC5402) (Macrococcoides caseolyticum)).